Consider the following 422-residue polypeptide: Exodeoxyribonuclease 7 large subunit (422 aa).

Belongs to the XseA family. Heterooligomer composed of large and small subunits.

Its subcellular location is the cytoplasm. It catalyses the reaction Exonucleolytic cleavage in either 5'- to 3'- or 3'- to 5'-direction to yield nucleoside 5'-phosphates.. Bidirectionally degrades single-stranded DNA into large acid-insoluble oligonucleotides, which are then degraded further into small acid-soluble oligonucleotides. In Leptospira borgpetersenii serovar Hardjo-bovis (strain JB197), this protein is Exodeoxyribonuclease 7 large subunit.